The chain runs to 268 residues: 3-deoxy-manno-octulosonate cytidylyltransferase (268 aa).

The protein belongs to the KdsB family.

It localises to the cytoplasm. The catalysed reaction is 3-deoxy-alpha-D-manno-oct-2-ulosonate + CTP = CMP-3-deoxy-beta-D-manno-octulosonate + diphosphate. The protein operates within nucleotide-sugar biosynthesis; CMP-3-deoxy-D-manno-octulosonate biosynthesis; CMP-3-deoxy-D-manno-octulosonate from 3-deoxy-D-manno-octulosonate and CTP: step 1/1. It participates in bacterial outer membrane biogenesis; lipopolysaccharide biosynthesis. In terms of biological role, activates KDO (a required 8-carbon sugar) for incorporation into bacterial lipopolysaccharide in Gram-negative bacteria. This Psychrobacter cryohalolentis (strain ATCC BAA-1226 / DSM 17306 / VKM B-2378 / K5) protein is 3-deoxy-manno-octulosonate cytidylyltransferase.